Consider the following 272-residue polypeptide: Large ribosomal subunit protein uL2cz/uL2cy (272 aa).

Disordered regions lie at residues methionine 1 to arginine 33 and valine 220 to lysine 272. Alanine 2 is modified (N-methylalanine). Positions lysine 7 to serine 30 are enriched in polar residues.

It belongs to the universal ribosomal protein uL2 family. In terms of assembly, component of the chloroplast large ribosomal subunit (LSU). Mature 70S chloroplast ribosomes of higher plants consist of a small (30S) and a large (50S) subunit. The 30S small subunit contains 1 molecule of ribosomal RNA (16S rRNA) and 24 different proteins. The 50S large subunit contains 3 rRNA molecules (23S, 5S and 4.5S rRNA) and 33 different proteins.

The protein localises to the plastid. The protein resides in the chloroplast. Component of the chloroplast ribosome (chloro-ribosome), a dedicated translation machinery responsible for the synthesis of chloroplast genome-encoded proteins, including proteins of the transcription and translation machinery and components of the photosynthetic apparatus. The polypeptide is Large ribosomal subunit protein uL2cz/uL2cy (rpl2-A) (Spinacia oleracea (Spinach)).